A 353-amino-acid chain; its full sequence is Quinolinate synthase (353 aa).

Iminosuccinate contacts are provided by H47 and S68. C113 serves as a coordination point for [4Fe-4S] cluster. Residues 139 to 141 and S156 contribute to the iminosuccinate site; that span reads YAN. C200 contributes to the [4Fe-4S] cluster binding site. Iminosuccinate is bound by residues 226-228 and T243; that span reads HPE. C297 is a binding site for [4Fe-4S] cluster.

This sequence belongs to the quinolinate synthase family. Type 1 subfamily. It depends on [4Fe-4S] cluster as a cofactor.

Its subcellular location is the cytoplasm. It catalyses the reaction iminosuccinate + dihydroxyacetone phosphate = quinolinate + phosphate + 2 H2O + H(+). It functions in the pathway cofactor biosynthesis; NAD(+) biosynthesis; quinolinate from iminoaspartate: step 1/1. In terms of biological role, catalyzes the condensation of iminoaspartate with dihydroxyacetone phosphate to form quinolinate. This Yersinia pseudotuberculosis serotype O:3 (strain YPIII) protein is Quinolinate synthase.